We begin with the raw amino-acid sequence, 215 residues long: Adenylate kinase (215 aa).

Residue 10–15 (GAGKGT) coordinates ATP. Residues 30 to 59 (STGDMFRAAIKEGTELGKQAKALMDQGKLV) form an NMP region. Residues Thr31, Arg36, 57-59 (KLV), 85-88 (GFPR), and Gln92 each bind AMP. Residues 122 to 159 (GRRVHQPSGRTYHIIYNPPKVAGQDDITGEELITRADD) are LID. ATP is bound by residues Arg123 and 132-133 (TY). 2 residues coordinate AMP: Arg156 and Arg167. Position 200 (Lys200) interacts with ATP.

The protein belongs to the adenylate kinase family. Monomer.

The protein localises to the cytoplasm. The catalysed reaction is AMP + ATP = 2 ADP. Its pathway is purine metabolism; AMP biosynthesis via salvage pathway; AMP from ADP: step 1/1. In terms of biological role, catalyzes the reversible transfer of the terminal phosphate group between ATP and AMP. Plays an important role in cellular energy homeostasis and in adenine nucleotide metabolism. The chain is Adenylate kinase from Haemophilus ducreyi (strain 35000HP / ATCC 700724).